Here is a 384-residue protein sequence, read N- to C-terminus: Probable peptidoglycan glycosyltransferase FtsW (384 aa).

Topologically, residues 1-19 (MAAVWRWFVPERPSFYDRG) are cytoplasmic. A helical membrane pass occupies residues 20–40 (LLALTFSLMGIGLMMVASASI). The Periplasmic segment spans residues 41 to 54 (KEGPGGDMFYFTKR). Residues 55-75 (HLIFLFVCLGIGVGTLYLPLE) traverse the membrane as a helical segment. The Cytoplasmic segment spans residues 76–83 (RWREWSGR). Residues 84 to 104 (LLVGALGLLFAVLAVGRTVNG) form a helical membrane-spanning segment. The Periplasmic segment spans residues 105 to 110 (AKRWIG). The chain crosses the membrane as a helical span at residues 111 to 131 (FGFFNIQPAELAKLALIVFIA). The Cytoplasmic segment spans residues 132-143 (SYLVRRSDEVRG). The helical transmembrane segment at 144 to 164 (NIAGFVKPLAVVFLLAIMLLA) threads the bilayer. The Periplasmic portion of the chain corresponds to 165–166 (QP). A helical membrane pass occupies residues 167-187 (DLGSVVVLFVCTFGLLFIGGA). Residue Lys-188 is a topological domain, cytoplasmic. The helical transmembrane segment at 189–209 (LVQFIAIIVAGLSALAGLIIY) threads the bilayer. Over 210 to 267 (EPYRLRRVTSFLDPWADPFGSGYQLTQSLMAFGRGGFFGQGLGNSVQKLSYLPEAHTD) the chain is Periplasmic. Residues 268-288 (FVFAILGEELGYFGVLVVLFL) traverse the membrane as a helical segment. Residues 289-316 (QLLLAMKALQIGRTALLRSKFFEGYMAC) are Cytoplasmic-facing. A helical transmembrane segment spans residues 317-337 (GIGIWFSFQTVVNVGAAAGML). Over 338 to 343 (PTKGLT) the chain is Periplasmic. A helical membrane pass occupies residues 344 to 364 (LPLVSYGGSSLIAITMAVAIL). At 365-384 (LRIDFERRLDTSHVIQREAA) the chain is on the cytoplasmic side.

The protein belongs to the SEDS family. FtsW subfamily.

Its subcellular location is the cell inner membrane. The catalysed reaction is [GlcNAc-(1-&gt;4)-Mur2Ac(oyl-L-Ala-gamma-D-Glu-L-Lys-D-Ala-D-Ala)](n)-di-trans,octa-cis-undecaprenyl diphosphate + beta-D-GlcNAc-(1-&gt;4)-Mur2Ac(oyl-L-Ala-gamma-D-Glu-L-Lys-D-Ala-D-Ala)-di-trans,octa-cis-undecaprenyl diphosphate = [GlcNAc-(1-&gt;4)-Mur2Ac(oyl-L-Ala-gamma-D-Glu-L-Lys-D-Ala-D-Ala)](n+1)-di-trans,octa-cis-undecaprenyl diphosphate + di-trans,octa-cis-undecaprenyl diphosphate + H(+). It participates in cell wall biogenesis; peptidoglycan biosynthesis. Peptidoglycan polymerase that is essential for cell division. The sequence is that of Probable peptidoglycan glycosyltransferase FtsW from Tolumonas auensis (strain DSM 9187 / NBRC 110442 / TA 4).